A 141-amino-acid polypeptide reads, in one-letter code: Ribonuclease P protein component (141 aa).

The protein belongs to the RnpA family. In terms of assembly, consists of a catalytic RNA component (M1 or rnpB) and a protein subunit.

It catalyses the reaction Endonucleolytic cleavage of RNA, removing 5'-extranucleotides from tRNA precursor.. Functionally, RNaseP catalyzes the removal of the 5'-leader sequence from pre-tRNA to produce the mature 5'-terminus. It can also cleave other RNA substrates such as 4.5S RNA. The protein component plays an auxiliary but essential role in vivo by binding to the 5'-leader sequence and broadening the substrate specificity of the ribozyme. This chain is Ribonuclease P protein component, found in Onion yellows phytoplasma (strain OY-M).